The sequence spans 668 residues: MERPGLVLQDLPPEILINIFSHLDEKDLFTLQELSTHFRNLIHDEELWKNLFKSRVHTTHFPTFSQSSKFSVEYIERTRGLHHWQHNKAIRTKYTIIPTRNWDQPSIERIVFDYPRVAAYNDGTITILQLQNHKRQKKFKKLIYIPCTTPQGCSTMDFNINAAVFGRFDGRVFGKLLSNKSYLTPVMEFTGRHSAGVTAICNSESWDTSREDWSVSGSENGEIIWWCENKLVKMWKVSNRVIWKLAFFKDWTLIMDDEKLYIIHQMQELHSIDIPKDLDEQPMRVRFFKMDFGSMTLVLADLNNVYTISVNPNGNFGNLRKLEMPEQICAVEIDEKTSQREQNWQFAGDDGCYISLLTTQNTLYIINIRDLSSSGLKVQCKISFDEQVYVSQVTNLIVVVALPNVLQILNAMTGELIKTVLKTEKFPEFLKVSQDKIIMGSGNVLNYLKFVSSDSKKHHHSTKGKNTVSNKWNETLNTELQYYDEDEDLRRKRQSEISRLIDAYGGDLELSGDTDEENDIQLRIALLESQEAQARNQAEAGEPVGDDEDEQLRRALEESQLIYETQTNSSANHGNNTNDEIDEDDEEFLRAIRQSRVEDERRRHLRNHTTGRRNGPLSDDNFATYGAAESSERTSTENTIGSSVGVDASNNVDEDLQLAIALSLSEIN.

The 47-residue stretch at 5 to 51 (GLVLQDLPPEILINIFSHLDEKDLFTLQELSTHFRNLIHDEELWKNL) folds into the F-box domain. S511 is modified (phosphoserine). Phosphothreonine is present on T514. UIM domains are found at residues 547–566 (DEDE…YETQ), 583–602 (EDDE…DERR), and 651–668 (NVDE…SEIN). A compositionally biased stretch (polar residues) spans 564–578 (ETQTNSSANHGNNTN). 2 disordered regions span residues 564 to 585 (ETQT…DEDD) and 599 to 639 (DERR…TENT).

In terms of assembly, interacts with SKP1. Component of the probable SCF(UFO1) complex containing CDC53, SKP1, RBX1 and UFO1.

It participates in protein modification; protein ubiquitination. Its function is as follows. Substrate recognition component of a SCF (SKP1-CUL1-F-box protein) E3 ubiquitin-protein ligase complex which mediates the ubiquitination and subsequent proteasomal degradation of target proteins. Probably recognizes and binds to phosphorylated target proteins. This is Ubiquitin ligase complex F-box protein UFO1 (UFO1) from Saccharomyces cerevisiae (strain ATCC 204508 / S288c) (Baker's yeast).